Here is a 478-residue protein sequence, read N- to C-terminus: Trigger factor (478 aa).

The tract at residues 1 to 41 is disordered; it reads MAELADAPDLGSGARKGVRVRLPPPAPHKNGGKNESRGSGQ. Positions 197 to 279 constitute a PPIase FKBP-type domain; it reads GDMLVVEYEV…IKEIKKKVLP (83 aa). The segment covering 455-472 has biased composition (basic and acidic residues); it reads VEQKQEEEKKEEKEEVKN. The interval 455–478 is disordered; it reads VEQKQEEEKKEEKEEVKNESQGNT.

The protein belongs to the FKBP-type PPIase family. Tig subfamily.

It localises to the cytoplasm. It carries out the reaction [protein]-peptidylproline (omega=180) = [protein]-peptidylproline (omega=0). Its function is as follows. Involved in protein export. Acts as a chaperone by maintaining the newly synthesized protein in an open conformation. Functions as a peptidyl-prolyl cis-trans isomerase. This is Trigger factor from Aquifex aeolicus (strain VF5).